A 538-amino-acid chain; its full sequence is Beta-1-syntrophin (538 aa).

An N-acetylalanine modification is found at A2. PH domains lie at 19 to 298 (RAQR…SNVN) and 322 to 433 (EIRH…QGCH). S87, S126, and S205 each carry phosphoserine. Residues 112–195 (GVKVLKQELG…EVLLEVKYMR (84 aa)) enclose the PDZ domain. The disordered stretch occupies residues 205–237 (SPVSEIGWETPPPESPRLGGSTSDPPSSQSFSF). At T214 the chain carries Phosphothreonine. Phosphoserine is present on residues S219, S232, S236, and S389. The span at 225–236 (STSDPPSSQSFS) shows a compositional bias: low complexity. The 57-residue stretch at 482–538 (PYEKLKMSSDDGIRMLYLDFGGKDGEIQLDLHSCPKPIVFIIHSFLSAKITRLGLVA) folds into the SU domain. The tract at residues 518–538 (PIVFIIHSFLSAKITRLGLVA) is calmodulin-binding.

The protein belongs to the syntrophin family. As to quaternary structure, monomer and homodimer. Interacts with the other members of the syntrophin family SNTA1 and SNTB2; with the sodium channel proteins SCN4A and SCN5A. Interacts with the viral HTLV-1 TAX protein and with dystrophin protein DMD and related proteins DTNA and UTRN. Interacts with DTNB. Post-translationally, phosphorylated by CaM-kinase II. As to expression, ubiquitous.

The protein resides in the cell membrane. It is found in the sarcolemma. Its subcellular location is the cell junction. It localises to the cytoplasm. The protein localises to the cytoskeleton. Functionally, adapter protein that binds to and probably organizes the subcellular localization of a variety of membrane proteins. May link various receptors to the actin cytoskeleton and the dystrophin glycoprotein complex. This Homo sapiens (Human) protein is Beta-1-syntrophin (SNTB1).